Reading from the N-terminus, the 448-residue chain is tRNA modification GTPase MnmE (448 aa).

Positions 22, 79, and 118 each coordinate (6S)-5-formyl-5,6,7,8-tetrahydrofolate. Residues 214–371 (GLHVVLAGQP…LRQELLRIAG (158 aa)) enclose the TrmE-type G domain. K(+) is bound at residue N224. GTP is bound by residues 224 to 229 (NVGKSS), 243 to 249 (TPIAGTT), and 268 to 271 (DTAG). Mg(2+) is bound at residue S228. 3 residues coordinate K(+): T243, I245, and T248. Residue T249 participates in Mg(2+) binding. K448 serves as a coordination point for (6S)-5-formyl-5,6,7,8-tetrahydrofolate.

Belongs to the TRAFAC class TrmE-Era-EngA-EngB-Septin-like GTPase superfamily. TrmE GTPase family. Homodimer. Heterotetramer of two MnmE and two MnmG subunits. K(+) serves as cofactor.

Its subcellular location is the cytoplasm. Its function is as follows. Exhibits a very high intrinsic GTPase hydrolysis rate. Involved in the addition of a carboxymethylaminomethyl (cmnm) group at the wobble position (U34) of certain tRNAs, forming tRNA-cmnm(5)s(2)U34. The protein is tRNA modification GTPase MnmE of Dechloromonas aromatica (strain RCB).